The sequence spans 142 residues: Large ribosomal subunit protein uL11 (142 aa).

This sequence belongs to the universal ribosomal protein uL11 family. As to quaternary structure, part of the ribosomal stalk of the 50S ribosomal subunit. Interacts with L10 and the large rRNA to form the base of the stalk. L10 forms an elongated spine to which L12 dimers bind in a sequential fashion forming a multimeric L10(L12)X complex. In terms of processing, one or more lysine residues are methylated.

Forms part of the ribosomal stalk which helps the ribosome interact with GTP-bound translation factors. The protein is Large ribosomal subunit protein uL11 of Alcanivorax borkumensis (strain ATCC 700651 / DSM 11573 / NCIMB 13689 / SK2).